The chain runs to 402 residues: Acetylornithine aminotransferase (402 aa).

Pyridoxal 5'-phosphate contacts are provided by residues 117–118 (GA) and Phe143. Arg146 lines the N(2)-acetyl-L-ornithine pocket. 231 to 234 (DEVQ) lines the pyridoxal 5'-phosphate pocket. Lys260 is subject to N6-(pyridoxal phosphate)lysine. A N(2)-acetyl-L-ornithine-binding site is contributed by Thr288. Residue Thr289 participates in pyridoxal 5'-phosphate binding.

The protein belongs to the class-III pyridoxal-phosphate-dependent aminotransferase family. ArgD subfamily. In terms of assembly, homodimer. Pyridoxal 5'-phosphate is required as a cofactor.

Its subcellular location is the cytoplasm. It carries out the reaction N(2)-acetyl-L-ornithine + 2-oxoglutarate = N-acetyl-L-glutamate 5-semialdehyde + L-glutamate. It functions in the pathway amino-acid biosynthesis; L-arginine biosynthesis; N(2)-acetyl-L-ornithine from L-glutamate: step 4/4. The protein is Acetylornithine aminotransferase of Corynebacterium efficiens (strain DSM 44549 / YS-314 / AJ 12310 / JCM 11189 / NBRC 100395).